The following is a 41-amino-acid chain: Large ribosomal subunit protein bL36 (41 aa).

This sequence belongs to the bacterial ribosomal protein bL36 family.

In Methylobacterium nodulans (strain LMG 21967 / CNCM I-2342 / ORS 2060), this protein is Large ribosomal subunit protein bL36.